The sequence spans 393 residues: Serine/threonine protein kinase AFUB_078980 (393 aa).

The 330-residue stretch at 61–390 (YQVLSKLGFG…APELLTDPWL (330 aa)) folds into the Protein kinase domain. ATP is bound by residues 67-75 (LGFGANSTV) and K90. Residue D190 is the Proton acceptor of the active site.

The protein belongs to the protein kinase superfamily. CMGC Ser/Thr protein kinase family.

It catalyses the reaction L-seryl-[protein] + ATP = O-phospho-L-seryl-[protein] + ADP + H(+). The enzyme catalyses L-threonyl-[protein] + ATP = O-phospho-L-threonyl-[protein] + ADP + H(+). Serine/threonine protein kinase; part of the subtelomeric hrmA-associated cluster (HAC) containing genes that alter the hyphal surface (such as reduced total chitin or increased beta-glucan exposure) and perturb inter-hyphal interactions within the developing biofilms, resulting in a loss of vertically aligned polarized growing filaments. Consequently, this hypoxia-typic morphotype (called H-MORPH) with altered biofilm architecture leads to increased hypoxia fitness, increased host inflammation, rapid disease progression, and mortality in a murine model of invasive aspergillosis. This chain is Serine/threonine protein kinase AFUB_078980, found in Aspergillus fumigatus (strain CBS 144.89 / FGSC A1163 / CEA10) (Neosartorya fumigata).